The following is an 85-amino-acid chain: Putative transmembrane protein ORF28 (85 aa).

Helical transmembrane passes span 32–52 and 59–79; these read IMLL…VQIV and LLSV…MLGI.

It is found in the host membrane. This chain is Putative transmembrane protein ORF28, found in Haloarcula hispanica (His1V).